Here is a 220-residue protein sequence, read N- to C-terminus: dITP/XTP pyrophosphatase (220 aa).

Position 13 to 18 (13 to 18) interacts with substrate; that stretch reads SHNAGK. 2 residues coordinate Mg(2+): aspartate 45 and aspartate 74. The active-site Proton acceptor is the aspartate 74. Substrate contacts are provided by residues serine 75, 163-166, lysine 186, and 199-200; these read FGYD and HR.

Belongs to the HAM1 NTPase family. In terms of assembly, homodimer. Requires Mg(2+) as cofactor.

It carries out the reaction XTP + H2O = XMP + diphosphate + H(+). The enzyme catalyses dITP + H2O = dIMP + diphosphate + H(+). The catalysed reaction is ITP + H2O = IMP + diphosphate + H(+). Pyrophosphatase that catalyzes the hydrolysis of nucleoside triphosphates to their monophosphate derivatives, with a high preference for the non-canonical purine nucleotides XTP (xanthosine triphosphate), dITP (deoxyinosine triphosphate) and ITP. Seems to function as a house-cleaning enzyme that removes non-canonical purine nucleotides from the nucleotide pool, thus preventing their incorporation into DNA/RNA and avoiding chromosomal lesions. This Mesorhizobium japonicum (strain LMG 29417 / CECT 9101 / MAFF 303099) (Mesorhizobium loti (strain MAFF 303099)) protein is dITP/XTP pyrophosphatase.